A 1242-amino-acid polypeptide reads, in one-letter code: DNA-directed RNA polymerase RPB2 homolog (1242 aa).

The C4-type zinc finger occupies 1180–1201; it reads CRNCGEPAIYNASHPIYKCMNC.

This sequence belongs to the RNA polymerase beta chain family. In terms of assembly, part of the viral DNA-directed RNA polymerase that consists of 8 polII-like subunits (RPB1, RPB2, RPB3, RPB5, RPB6, RPB7, RPB9, RPB10), a capping enzyme and a termination factor.

Its subcellular location is the host cytoplasm. The protein resides in the virion. It carries out the reaction RNA(n) + a ribonucleoside 5'-triphosphate = RNA(n+1) + diphosphate. In terms of biological role, catalytic component of the DNA-directed RNA polymerase (RNAP) that catalyzes the transcription in the cytoplasm of viral DNA into RNA using the four ribonucleoside triphosphates as substrates. Forms the polymerase active center together with RPB1. Part of the core element with the central large cleft, the clamp element that moves to open and close the cleft and the jaws that are thought to grab the incoming DNA template. In Ornithodoros (relapsing fever ticks), this protein is DNA-directed RNA polymerase RPB2 homolog.